A 500-amino-acid chain; its full sequence is Cysteine--tRNA ligase (500 aa).

C29 contributes to the Zn(2+) binding site. The 'HIGH' region motif lies at 31–41 (VTVYDLCHLGH). Positions 213, 238, and 242 each coordinate Zn(2+). Residues 270–274 (KMSKS) carry the 'KMSKS' region motif. Residue K273 coordinates ATP.

It belongs to the class-I aminoacyl-tRNA synthetase family. In terms of assembly, monomer. Requires Zn(2+) as cofactor.

It localises to the cytoplasm. The catalysed reaction is tRNA(Cys) + L-cysteine + ATP = L-cysteinyl-tRNA(Cys) + AMP + diphosphate. In Prochlorococcus marinus (strain NATL2A), this protein is Cysteine--tRNA ligase.